We begin with the raw amino-acid sequence, 252 residues long: MMLHAQHMPGQPGAPSLVFLHGFSGDCREWQPVGEQFHGCSRLYIDLPGHGGSAAIPVGGFADVIRLLRATLISYNILKFWLVGYSLGGRVAMMAACQGIPGLCGLVVEGGHPGLQNEQARAERRLSDGRWAERFRREPLTEVFHDWYQQPVFASLTAQQRQALTALRSQNNGETLAAMLEATSLAAQPDLREALNALAFPFYYLCGERDSKFRALAQEVAATCHVIRNAGHNAHRENPAGVVDSLAQILRL.

It belongs to the AB hydrolase superfamily. MenH family. Monomer.

The catalysed reaction is 5-enolpyruvoyl-6-hydroxy-2-succinyl-cyclohex-3-ene-1-carboxylate = (1R,6R)-6-hydroxy-2-succinyl-cyclohexa-2,4-diene-1-carboxylate + pyruvate. It functions in the pathway quinol/quinone metabolism; 1,4-dihydroxy-2-naphthoate biosynthesis; 1,4-dihydroxy-2-naphthoate from chorismate: step 3/7. It participates in quinol/quinone metabolism; menaquinone biosynthesis. Its function is as follows. Catalyzes a proton abstraction reaction that results in 2,5-elimination of pyruvate from 2-succinyl-5-enolpyruvyl-6-hydroxy-3-cyclohexene-1-carboxylate (SEPHCHC) and the formation of 2-succinyl-6-hydroxy-2,4-cyclohexadiene-1-carboxylate (SHCHC). The polypeptide is 2-succinyl-6-hydroxy-2,4-cyclohexadiene-1-carboxylate synthase (Salmonella schwarzengrund (strain CVM19633)).